Here is a 502-residue protein sequence, read N- to C-terminus: ATP synthase subunit alpha (502 aa).

ATP is bound at residue 169–176; that stretch reads GDRQTGKT.

The protein belongs to the ATPase alpha/beta chains family. As to quaternary structure, F-type ATPases have 2 components, CF(1) - the catalytic core - and CF(0) - the membrane proton channel. CF(1) has five subunits: alpha(3), beta(3), gamma(1), delta(1), epsilon(1). CF(0) has three main subunits: a(1), b(2) and c(9-12). The alpha and beta chains form an alternating ring which encloses part of the gamma chain. CF(1) is attached to CF(0) by a central stalk formed by the gamma and epsilon chains, while a peripheral stalk is formed by the delta and b chains.

The protein resides in the cell membrane. It catalyses the reaction ATP + H2O + 4 H(+)(in) = ADP + phosphate + 5 H(+)(out). Its function is as follows. Produces ATP from ADP in the presence of a proton gradient across the membrane. The alpha chain is a regulatory subunit. This Staphylococcus aureus (strain Mu3 / ATCC 700698) protein is ATP synthase subunit alpha.